We begin with the raw amino-acid sequence, 445 residues long: 2-oxoisovalerate dehydrogenase subunit alpha, mitochondrial (445 aa).

A mitochondrion-targeting transit peptide spans 1 to 45 (MAVAIAAARVWRLNRGLSQAALLLLRRPGARGLARSHPRRQQQQF). Residues 33–54 (LARSHPRRQQQQFSSLDDKPQF) are disordered. Thiamine diphosphate contacts are provided by Y158 and R159. Residue S206 coordinates K(+). S207 lines the thiamine diphosphate pocket. Residues P208, T211, and Q212 each contribute to the K(+) site. E238 contacts Mg(2+). G239, A240, and R265 together coordinate thiamine diphosphate. Residues N267 and Y269 each coordinate Mg(2+). H336 contacts thiamine diphosphate. S337 carries the post-translational modification Phosphoserine; by BCKDK. T338 carries the phosphothreonine modification. Phosphoserine occurs at positions 339 and 347. N6-acetyllysine; alternate is present on K356. K356 is subject to N6-succinyllysine; alternate. N6-succinyllysine is present on K380.

This sequence belongs to the BCKDHA family. Heterotetramer of 2 alpha/BCKDHA and 2 beta chains/BCKDHB that forms the branched-chain alpha-keto acid decarboxylase (E1) component of the BCKD complex. The branched-chain alpha-ketoacid dehydrogenase is a large complex composed of three major building blocks E1, E2 and E3. It is organized around E2, a 24-meric cubic core composed of DBT, to which are associated 6 to 12 copies of E1, and approximately 6 copies of the dehydrogenase E3, a DLD dimer. Interacts with PPM1K. It depends on thiamine diphosphate as a cofactor. The cofactor is Mg(2+). In terms of processing, phosphorylated at Ser-337 by BCKDK and dephosphorylated by protein phosphatase PPM1K.

Its subcellular location is the mitochondrion matrix. The enzyme catalyses N(6)-[(R)-lipoyl]-L-lysyl-[protein] + 3-methyl-2-oxobutanoate + H(+) = N(6)-[(R)-S(8)-2-methylpropanoyldihydrolipoyl]-L-lysyl-[protein] + CO2. Together with BCKDHB forms the heterotetrameric E1 subunit of the mitochondrial branched-chain alpha-ketoacid dehydrogenase (BCKD) complex. The BCKD complex catalyzes the multi-step oxidative decarboxylation of alpha-ketoacids derived from the branched-chain amino-acids valine, leucine and isoleucine producing CO2 and acyl-CoA which is subsequently utilized to produce energy. The E1 subunit catalyzes the first step with the decarboxylation of the alpha-ketoacid forming an enzyme-product intermediate. A reductive acylation mediated by the lipoylamide cofactor of E2 extracts the acyl group from the E1 active site for the next step of the reaction. The sequence is that of 2-oxoisovalerate dehydrogenase subunit alpha, mitochondrial (BCKDHA) from Pan troglodytes (Chimpanzee).